We begin with the raw amino-acid sequence, 489 residues long: MSRYGNAPPPYEEVVSVATPSYVQQPWVPPRYFAPTEGRNSIVYDQFPTCYDTTKLFLVDNKSADITDLNMQNDHSHFATTVVQNSEFTPREASTQHITLDNRSRWGAKLKTLIQTNLPSVTDYMYTNSLRVKLMESYDEATGTATYEWHDITLPEGNFDSGRIIDLLNNAIWELYLTYGRQNGVREDQIGIKFDTRNFRLGFDPLTNLIMPGHYTYEYFHPDIVLMKGCAVDFSKTRLNNVLGWRKRYPYQPGFVITYDDLVGGDIPPLLDLAAYLKKPREGAGGPIIRALQKDSKGRSYHVQYTDLGEVTGYRSLYLAYNYTSDVTHLRKSTVRSWLVLTAPDITGGAQQLYWSLPDMALAPTTFRPSGQTPATFPVVSTEPLPIAARTIFNAQPGYAQIVNQNTSQTMVYNRFPENAILMRPPQPFMVQVPENVTTVTDHGTLPLQNTLSGVQRVAVTDSRRRTCPYVYKCAATLEPHIMSSRTLQ.

This sequence belongs to the adenoviridae penton family. Interacts with the fiber protein (via N-terminal tail region). Interacts with the capsid vertex protein; this interaction binds the penton base to neighboring peripentonal hexons.

It is found in the virion. The protein localises to the host nucleus. Functionally, major capsid protein that self-associates to form penton base pentamers, each in the shape of a pentagon, situated at the 12 vertices of the pseudo T=25 capsid. Involved in virus secondary attachment to host cell after initial attachment by the fiber protein, and in endocytosis of virions. As the virus enters the host cell, penton proteins are shed concomitant with virion acidification in the endosome. In Murine adenovirus A serotype 1 (MAdV-1), this protein is Penton protein.